The chain runs to 230 residues: Potassium/proton antiporter CemA (230 aa).

A run of 4 helical transmembrane segments spans residues 7 to 27 (LPSFLYLVFIVLLPWGVSFSF), 106 to 126 (IILHFSTNIICLAILSGSFFL), 145 to 165 (LNDSVKAFFILLVTDFFVGFH), and 181 to 201 (LGWVPNELIFTIFVCSFPVIL).

It belongs to the CemA family.

Its subcellular location is the plastid. It localises to the chloroplast inner membrane. It catalyses the reaction K(+)(in) + H(+)(out) = K(+)(out) + H(+)(in). Its function is as follows. Contributes to K(+)/H(+) antiport activity by supporting proton efflux to control proton extrusion and homeostasis in chloroplasts in a light-dependent manner to modulate photosynthesis. Prevents excessive induction of non-photochemical quenching (NPQ) under continuous-light conditions. Indirectly promotes efficient inorganic carbon uptake into chloroplasts. In Oryza nivara (Indian wild rice), this protein is Potassium/proton antiporter CemA.